The following is a 93-amino-acid chain: MPRSLKKGPFVDDHLLKKVDVQNDKNTKQVIKTWSRRSTIIPDFIGHTFAVHDGRKHVPVFVTEAMVGHKLGEFAPTRTFKGHIKDDRKSKRR.

Belongs to the universal ribosomal protein uS19 family.

Its function is as follows. Protein S19 forms a complex with S13 that binds strongly to the 16S ribosomal RNA. This is Small ribosomal subunit protein uS19 from Mycobacterium sp. (strain JLS).